We begin with the raw amino-acid sequence, 72 residues long: Metallothionein-like protein 1B (72 aa).

Belongs to the metallothionein superfamily. Type 15 family. Expressed in leaves of mature plants.

Its function is as follows. Metallothioneins have a high content of cysteine residues that bind various heavy metals. Functions as a metal chelator of nickel (Ni), cadmium (Cd), zinc (Zn) and copper (Cu). Possesses higher affinity for Ni and Cd ions compared to Zn and Cu ions. The sequence is that of Metallothionein-like protein 1B (MT1B) from Oryza sativa subsp. japonica (Rice).